The sequence spans 186 residues: Cell wall protein phiA (186 aa).

An N-terminal signal peptide occupies residues 1 to 19 (MKLLAIISASLALAGFTTA).

Belongs to the phiA family.

The protein localises to the secreted. It is found in the cell wall. In terms of biological role, cell wall protein involved in development of asexual structures such as phialide and conidium development, and thus required for spore formation. Plays a role as a general stress protectant produced by the fungus in competition with antagonistic bacteria. The sequence is that of Cell wall protein phiA from Arthroderma benhamiae (strain ATCC MYA-4681 / CBS 112371) (Trichophyton mentagrophytes).